We begin with the raw amino-acid sequence, 651 residues long: MIEIVNVTKTYRIGESSVKALDGVSLTIGQGEFVAIMGASGSGKSTLMHILGLLDVPDTGQYRLMGKEVSRMSDDELAGIRNNVAGFVFQQFHLLSRMSTIDNVVLPCIYSGQRGDFRKDALKRLEMVGLAQRSDHRPNQMSGGEQQRVAIARALIRDPMLIFADEPTGNLDTKNSHEIMRILTDLHRQGKTIIMVTHETDIAEFADRVITMKDGVVVDDRKKQDARLNPQMPQGGMEAAHSALFQPSRLLGFVVQAFQSIASNKIRTFLSVLGILVGVASVIAMMALGTGAKASMEEQLKSMGSNLLSVRGGSAKIGGASQGFGTVTRFTEKDAAAIQAIPNLIDHVSGDVTGSGQLVYLDKNWSTSVEGVDYDYGEMRAAIPTVGRWFTREEIQERAKVAILGTTVAMQLFGDADPVDKIIKINRINFRVIGVAPAKGFAGPRDQDDVVYIPVSTAMYRVLGKLYLDGIYVEVSSAENIAPATQAIDALIRKRHKLAADDQDSFNIRDMTQFQQMLSATTQTMSMLLGSIAAISLVVGGIGIMNIMLVSVTERTREIGLRKAIGARKGDIMLQFLIESVGMTLSGGIIGIVVGVGVSVMLSAFAGWAVKTSMFSVVLATGFSVLIGLFFGLWPARKAAALKPVEALRYE.

An ABC transporter domain is found at 2–239 (IEIVNVTKTY…PQMPQGGMEA (238 aa)). 38 to 45 (GASGSGKS) contacts ATP. 4 helical membrane passes run 269 to 289 (FLSVLGILVGVASVIAMMALG), 532 to 552 (IAAISLVVGGIGIMNIMLVSV), 589 to 609 (IIGIVVGVGVSVMLSAFAGWA), and 614 to 634 (MFSVVLATGFSVLIGLFFGLW).

It belongs to the ABC transporter superfamily. Macrolide exporter (TC 3.A.1.122) family. Homodimer.

It localises to the cell inner membrane. Its function is as follows. Non-canonical ABC transporter that contains transmembrane domains (TMD), which form a pore in the inner membrane, and an ATP-binding domain (NBD), which is responsible for energy generation. Confers resistance against macrolides. The chain is Macrolide export ATP-binding/permease protein MacB from Chlorobaculum tepidum (strain ATCC 49652 / DSM 12025 / NBRC 103806 / TLS) (Chlorobium tepidum).